A 711-amino-acid polypeptide reads, in one-letter code: Angiogenic factor with G patch and FHA domains 1 (711 aa).

Residues 1–19 (MASEAPSPPSPSPPPPASP) show a composition bias toward pro residues. Disordered regions lie at residues 1-23 (MASE…EPEL), 137-184 (ALDP…EGPA), 260-297 (PYQT…SEDQ), and 311-400 (EHSG…EDEE). Residue alanine 2 is modified to N-acetylalanine. A phosphoserine mark is found at serine 7 and serine 12. Residues 19 to 85 (PEPELAQLRR…SKILHCGKNE (67 aa)) adopt a coiled-coil conformation. Over residues 167-176 (AVTSDSQESV) the composition is skewed to polar residues. Residues 270-279 (RERRLKKRRK) show a composition bias toward basic residues. Basic and acidic residues predominate over residues 287 to 297 (NEEKDLSSEDQ). Phosphoserine is present on serine 344. Positions 361 to 370 (SESEPEEGEI) are enriched in acidic residues. Over residues 374 to 391 (QSEKSYDGDSSSGDRETS) the composition is skewed to basic and acidic residues. Positions 431-484 (ATIGREKDMEHTVRIPEVAVSKFHAEVYFDHDLQSYVLVDQGSQNGTIVNGKQI) constitute an FHA domain. Basic and acidic residues-rich tracts occupy residues 579-606 (LKNP…RDDA) and 613-623 (EITDSNKGRKM). The disordered stretch occupies residues 579-623 (LKNPKYKDRAGKRREQVGSEGTFQRDDAPASVHSEITDSNKGRKM). The 47-residue stretch at 616–662 (DSNKGRKMLEKMGWKRGEGLGKDGGGMKTPIQLQLRRTHAGLGTGKL) folds into the G-patch domain. An N6-acetyllysine modification is found at lysine 661. A compositionally biased stretch (basic and acidic residues) spans 690-699 (FTENKPRKET). The segment at 690–711 (FTENKPRKETPGAVPWVTGTAE) is disordered.

Interacts with the secreted angiogenic factor TNFSF12.

Its subcellular location is the cytoplasm. It is found in the secreted. In terms of biological role, promotes angiogenesis and the proliferation of endothelial cells. Able to bind to endothelial cells and promote cell proliferation, suggesting that it may act in an autocrine fashion. This Mus musculus (Mouse) protein is Angiogenic factor with G patch and FHA domains 1 (Aggf1).